A 1237-amino-acid chain; its full sequence is Zinc finger protein ZFAT (1237 aa).

The segment at 12–35 adopts a C2H2-type 1 zinc-finger fold; sequence FMCKCCNLFSPNQSELVTHVSEKH. Positions 50-110 are disordered; that stretch reads RPLNTPENPN…GPLATEEGSR (61 aa). The span at 70–81 shows a compositional bias: basic residues; sequence MKRKRGRPKGST. A C2H2-type 2; degenerate zinc finger spans residues 116–141; the sequence is LECSKCCRKFSNTRQLRKHICIIVLN. A disordered region spans residues 147 to 188; it reads GDAGNESDLDLEKTYKEDDREKASKRPRAQKTEKVQKISGKE. Basic and acidic residues predominate over residues 156-186; that stretch reads DLEKTYKEDDREKASKRPRAQKTEKVQKISG. C2H2-type zinc fingers lie at residues 271-293, 299-321, 326-349, 354-377, 404-426, 432-454, and 458-481; these read FTCE…LRIH, YKCS…LRKH, FACD…ERVH, QHCR…RDMH, YDCH…MLVH, FACE…VRKH, and YVCA…REVH. Positions 273, 276, 289, 293, 301, 304, 317, 321, 328, 331, 344, 349, 356, 359, 372, 377, 406, 409, 422, and 426 each coordinate Zn(2+). Positions 460, 463, 476, and 481 each coordinate Zn(2+). Disordered regions lie at residues 551–576 and 601–671; these read VPGD…LSPC and SDTS…CLRA. Residues 565 to 574 are compositionally biased toward polar residues; sequence TPQSESSSLS. Over residues 601-617 the composition is skewed to low complexity; it reads SDTSSAEPPAAAEATSD. C2H2-type zinc fingers lie at residues 737 to 759, 765 to 788, 793 to 817, and 825 to 848; these read LECE…VRTH, YYCS…IQKH, LKCP…LKVH, and YSCP…KTNH. Zn(2+)-binding residues include C767, C770, H783, H788, C795, C800, H813, H817, C827, C830, H843, H848, C877, C880, H894, H898, C906, C909, H922, H926, C934, C937, H950, and L953. A C2H2-type 14; degenerate zinc finger spans residues 875–898; it reads MKCPYCDFYFMKNGSDLQRHIWAH. 5 consecutive C2H2-type zinc fingers follow at residues 904 to 926, 932 to 954, 961 to 983, 989 to 1012, and 1036 to 1059; these read FKCS…MNRH, HLCD…KLLH, FKCT…MEQH, FRCA…NRKH, and LKCP…KNKH.

As to expression, detected in spleen and thymus but not in liver, muscle, heart, kidney, brain, bone marrow or pancreas. Expressed in CD19+, CD4+ and CD8+ lymphocytes but not in CD11b+ lymphocytes or peritoneal macrophages (at protein level).

Its subcellular location is the nucleus. It localises to the cytoplasm. The protein resides in the cytosol. Functionally, may be involved in transcriptional regulation. Overexpression causes down-regulation of a number of genes involved in the immune response. Some genes are also up-regulated. The polypeptide is Zinc finger protein ZFAT (Zfat) (Mus musculus (Mouse)).